The chain runs to 105 residues: Ketoisovalerate oxidoreductase subunit VorD (105 aa).

2 4Fe-4S ferredoxin-type domains span residues 44–73 (FKPV…IKPD) and 74–103 (GYVA…MIKE). [4Fe-4S] cluster contacts are provided by cysteine 53, cysteine 56, cysteine 59, cysteine 63, cysteine 83, cysteine 86, cysteine 89, and cysteine 93.

Heterotetramer of one alpha, one beta, one delta and one gamma chain. [4Fe-4S] cluster is required as a cofactor.

The catalysed reaction is 3-methyl-2-oxobutanoate + 2 oxidized [2Fe-2S]-[ferredoxin] + CoA = 2-methylpropanoyl-CoA + 2 reduced [2Fe-2S]-[ferredoxin] + CO2 + H(+). The protein is Ketoisovalerate oxidoreductase subunit VorD (vorD) of Pyrococcus furiosus (strain ATCC 43587 / DSM 3638 / JCM 8422 / Vc1).